Here is a 582-residue protein sequence, read N- to C-terminus: Protein alan shepard (582 aa).

Residues 1–12 are compositionally biased toward pro residues; that stretch reads MHPRYSPAPPPQ. The interval 1-73 is disordered; the sequence is MHPRYSPAPP…AAPPTSRSAF (73 aa). The residue at position 5 (Tyr-5) is a Phosphotyrosine. Residues 13-24 are compositionally biased toward low complexity; that stretch reads QQQQMGGPPHQQ. Gly residues predominate over residues 25 to 35; the sequence is QGGGGGGGGSM. The segment covering 37–57 has biased composition (polar residues); sequence GPSNAQQLPPQIPRSQNYSNG. The segment covering 58–72 has biased composition (low complexity); that stretch reads SSSSAAAAPPTSRSA. Phosphotyrosine is present on residues Tyr-125 and Tyr-142. Residues 164–225 are disordered; it reads PATTTYGQRV…TVQNQNQQGG (62 aa). A compositionally biased stretch (low complexity) spans 178 to 225; sequence SPSNTNSSSSSNTGSQSGTLSTSLSNTTNTNTNMGPNGTVQNQNQQGG. 2 consecutive RRM domains span residues 231-304 and 310-389; these read TNLY…MAKQ and TNLY…FADG. Residues 555 to 582 form a disordered region; that stretch reads PMTDSEQASTAASPDEAYTQYPHQAAPK.

Has a role in the perception of gravity. This Drosophila erecta (Fruit fly) protein is Protein alan shepard.